Consider the following 213-residue polypeptide: Phosphate-specific transport system accessory protein PhoU homolog 2 (213 aa).

The protein belongs to the PhoU family. Homodimer.

It is found in the cytoplasm. Plays a role in the regulation of phosphate uptake. In this role, it may bind, possibly as a chaperone, to PhoR, PhoP or a PhoR-PhoP complex to promote dephosphorylation of phospho-PhoP, or inhibit formation of the PhoR-PhoP transitory complex. This is Phosphate-specific transport system accessory protein PhoU homolog 2 (phoU2) from Mycobacterium bovis (strain ATCC BAA-935 / AF2122/97).